The sequence spans 589 residues: MDIGKIDIPESSGVYLMKKNNKVIYVGKAKNLKNRVSSYFNRVHESEKTNELVKNIEDIEFFLTNTEIDALLLENNLIKKYSPKYNILLKDEKTYPFIKISKEDFSSIKIVRTTKALDIKSGEYFGPYPYGAWRLKNILMKLFKIRDCNRDMKKTSPRPCLKYYMKSCTGPCVYKDIKEEYNKDVENLKQVLKGNTSKLINELTALMNKASQDMDFEKSIIYREQIKELKSIASSQIIQYERELDEDIFVFKTILDKAFICVLNMRDGKILGKSSTSIDLKNKITDNIYEAIFMSYYSKHILPKSLVLDAEYENELSVVVKALTIEDSKKKEFHFPKIKSRRKELLDMAYKNLERDIESYFSKKDTIEKGIKDLHDILGLKRFPRKIECFDISNIQGKDAVASMSVSIEGRAARKEYRKFKIRCKDTPDDFSMMREVIERRYSKLPDIEFPDVILIDGGLGQINSAGEVLKRLGKIHLSELLSLAERNEEIYKYGESIPYVLSKDMEALKIFQRVRDEAHRFGITYHRKIRSKRIISSELDKIDGIGEVRRRKLLTKFGSISAIKKASIEELKEIIPEKVALEIKNKIR.

The region spanning 10–87 (ESSGVYLMKK…IKKYSPKYNI (78 aa)) is the GIY-YIG domain. The UVR domain occupies 197–232 (SKLINELTALMNKASQDMDFEKSIIYREQIKELKSI).

The protein belongs to the UvrC family. Interacts with UvrB in an incision complex.

It is found in the cytoplasm. Functionally, the UvrABC repair system catalyzes the recognition and processing of DNA lesions. UvrC both incises the 5' and 3' sides of the lesion. The N-terminal half is responsible for the 3' incision and the C-terminal half is responsible for the 5' incision. The protein is UvrABC system protein C of Fusobacterium nucleatum subsp. nucleatum (strain ATCC 25586 / DSM 15643 / BCRC 10681 / CIP 101130 / JCM 8532 / KCTC 2640 / LMG 13131 / VPI 4355).